Here is a 229-residue protein sequence, read N- to C-terminus: Thymidylate kinase (229 aa).

Residue 9–16 (GPEGSGKS) participates in ATP binding.

This sequence belongs to the thymidylate kinase family.

The enzyme catalyses dTMP + ATP = dTDP + ADP. Phosphorylation of dTMP to form dTDP in both de novo and salvage pathways of dTTP synthesis. This chain is Thymidylate kinase, found in Roseiflexus castenholzii (strain DSM 13941 / HLO8).